The following is a 40-amino-acid chain: Alpha-conotoxin GIC (40 aa).

The propeptide occupies 1 to 20 (SDGRNDAAKAFDLISSTVKK). 2 cysteine pairs are disulfide-bonded: C22–C28 and C23–C36. The tract at residues 24-26 (SHP) is ser-Xaa-Pro motif, crucial for potent interaction with nAChR. Position 36 is a cysteine amide (C36).

In terms of tissue distribution, expressed by the venom duct.

The protein resides in the secreted. Alpha-conotoxins bind to the nicotinic acetylcholine receptors (nAChR) and inhibit them. This toxin reversibly blocks neuronal nAChRs (alpha-3/beta-2 = alpha-6 or -3/beta-2 or -3 &gt; alpha-3/beta-4 = alpha-4/beta-2). This Conus geographus (Geography cone) protein is Alpha-conotoxin GIC.